The sequence spans 480 residues: Probable cyclodipeptide synthase PUL1 (480 aa).

Its pathway is siderophore biosynthesis. Its function is as follows. Probable cyclodipeptide synthase; part of the PUL gene cluster that mediates the formation of pulcherrimin, a red iron-containing pigment composed of two cyclized and modified leucine molecules that acts as a siderophore, a chelator that binds iron outside the cell for subsequent uptake. Two leucine molecules are cyclized via a cyclodipeptide synthase, and the resulting diketopiperazine is oxidized by a cytochrome P450 monooxygenase to generate pulcherriminic acid (PA), which can then spontaneously bind iron to form pulcherrimin. The probable cyclodipeptide synthase PUL1 and the cytochrome P450 monooxygenase PUL2 encode the enzymes responsible for the two-step pulcherrimin biosynthesis pathway. The protein is Probable cyclodipeptide synthase PUL1 of Kluyveromyces lactis (strain ATCC 8585 / CBS 2359 / DSM 70799 / NBRC 1267 / NRRL Y-1140 / WM37) (Yeast).